The primary structure comprises 259 residues: Thiazole synthase (259 aa).

K98 (schiff-base intermediate with DXP) is an active-site residue. Residues G159, A185–G186, and N207–S208 contribute to the 1-deoxy-D-xylulose 5-phosphate site.

The protein belongs to the ThiG family. In terms of assembly, homotetramer. Forms heterodimers with either ThiH or ThiS.

It is found in the cytoplasm. It catalyses the reaction [ThiS sulfur-carrier protein]-C-terminal-Gly-aminoethanethioate + 2-iminoacetate + 1-deoxy-D-xylulose 5-phosphate = [ThiS sulfur-carrier protein]-C-terminal Gly-Gly + 2-[(2R,5Z)-2-carboxy-4-methylthiazol-5(2H)-ylidene]ethyl phosphate + 2 H2O + H(+). The protein operates within cofactor biosynthesis; thiamine diphosphate biosynthesis. Its function is as follows. Catalyzes the rearrangement of 1-deoxy-D-xylulose 5-phosphate (DXP) to produce the thiazole phosphate moiety of thiamine. Sulfur is provided by the thiocarboxylate moiety of the carrier protein ThiS. In vitro, sulfur can be provided by H(2)S. The protein is Thiazole synthase of Chlorobium phaeovibrioides (strain DSM 265 / 1930) (Prosthecochloris vibrioformis (strain DSM 265)).